Here is a 390-residue protein sequence, read N- to C-terminus: Chorismate synthase (390 aa).

R48 and R54 together coordinate NADP(+). FMN contacts are provided by residues 125-127, 238-239, G278, 293-297, and R319; these read RSS, NA, and KPTSS. The segment at 360-390 is disordered; the sequence is KVPGNIINPTNPVTTQPDVRRAEDPEPDENS. The span at 366–376 shows a compositional bias: polar residues; it reads INPTNPVTTQP.

Belongs to the chorismate synthase family. In terms of assembly, homotetramer. It depends on FMNH2 as a cofactor.

It catalyses the reaction 5-O-(1-carboxyvinyl)-3-phosphoshikimate = chorismate + phosphate. Its pathway is metabolic intermediate biosynthesis; chorismate biosynthesis; chorismate from D-erythrose 4-phosphate and phosphoenolpyruvate: step 7/7. In terms of biological role, catalyzes the anti-1,4-elimination of the C-3 phosphate and the C-6 proR hydrogen from 5-enolpyruvylshikimate-3-phosphate (EPSP) to yield chorismate, which is the branch point compound that serves as the starting substrate for the three terminal pathways of aromatic amino acid biosynthesis. This reaction introduces a second double bond into the aromatic ring system. In Nitrosomonas eutropha (strain DSM 101675 / C91 / Nm57), this protein is Chorismate synthase.